Consider the following 400-residue polypeptide: Argininosuccinate synthase (400 aa).

ATP contacts are provided by residues A9 to S17 and A37. Y88 is a binding site for L-citrulline. G118 contributes to the ATP binding site. L-aspartate-binding residues include T120, N124, and D125. Residue N124 participates in L-citrulline binding. R128, S176, S185, E261, and Y273 together coordinate L-citrulline.

This sequence belongs to the argininosuccinate synthase family. Type 1 subfamily. Homotetramer.

It is found in the cytoplasm. The enzyme catalyses L-citrulline + L-aspartate + ATP = 2-(N(omega)-L-arginino)succinate + AMP + diphosphate + H(+). The protein operates within amino-acid biosynthesis; L-arginine biosynthesis; L-arginine from L-ornithine and carbamoyl phosphate: step 2/3. The polypeptide is Argininosuccinate synthase (Prochlorococcus marinus (strain MIT 9211)).